The chain runs to 367 residues: MSKVKGDLEKSDKRPPSSMSTGSADSGVFSSGVHASSPSHSQGSSSQSGPPSPTTQLNSLLFETANLIAVNEQLRKEIAENKQIQTNQMRALRYSSNPVDQPFVANSISPHHGFPQRPPRGERRMQKPESYKTVICQAWLESKTCTFAENCRFAHGEEELRPAKLESRQNNKYKTKLCDKYTTTGLCPYGKRCLFIHPDNQPNAYIRADKLYEVSQRHALADLRDHVESQIMTGNTRNSYNQQPPPMGGLEMQSSPMKSSSDSSHMRSPMAQMNCETTRPHPSWPLESSSFFLPPEMSSINNNNLMSPFETPFPNGSTGIQPHFVTAKRRAAFPPVPSNFQQDDDNMSSIPGFDHLAEDMAKHLELW.

Over residues 1-15 (MSKVKGDLEKSDKRP) the composition is skewed to basic and acidic residues. Residues 1–57 (MSKVKGDLEKSDKRPPSSMSTGSADSGVFSSGVHASSPSHSQGSSSQSGPPSPTTQL) form a disordered region. A compositionally biased stretch (low complexity) spans 30–49 (SSGVHASSPSHSQGSSSQSG). Residues 63 to 92 (ETANLIAVNEQLRKEIAENKQIQTNQMRAL) adopt a coiled-coil conformation. The interval 107 to 126 (SISPHHGFPQRPPRGERRMQ) is disordered. 2 C3H1-type zinc fingers span residues 130–158 (SYKT…HGEE) and 172–200 (KYKT…HPDN). Residues 235–268 (NTRNSYNQQPPPMGGLEMQSSPMKSSSDSSHMRS) are disordered. A compositionally biased stretch (low complexity) spans 252 to 268 (MQSSPMKSSSDSSHMRS).

As to expression, exclusively expressed in the hermaphrodite gonad. Weakly distributed throughout gonadal oocytes from the mitotic stage to the developing diakinesis stage, with expression restricted to the distal region of the gonad.

Zinc-finger protein that may play a role in oocyte maturation and fertility. This chain is CCCH-type zinc finger protein moe-3, found in Caenorhabditis elegans.